A 509-amino-acid chain; its full sequence is Cytochrome P450 monooxygenase fumoA (509 aa).

A helical membrane pass occupies residues 5–27 (LANLNFPYLILSACLSAILLSRF). Asn-317, Asn-369, and Asn-378 each carry an N-linked (GlcNAc...) asparagine glycan. Cys-456 lines the heme pocket. Asn-464 carries N-linked (GlcNAc...) asparagine glycosylation.

This sequence belongs to the cytochrome P450 family. It depends on heme as a cofactor.

The protein localises to the membrane. It participates in secondary metabolite biosynthesis. Its function is as follows. Cytochrome P450 monooxygenase; part of the gene cluster that mediates the biosynthesis of fumosorinone, a 2-pyridone alkaloid that acts as an inhibitor of protein tyrosine phosphatase 1B which is implicated asa negative regulator of insulin receptor signaling and a potential drug target for the treatment of type II diabetes and other associated metabolic syndromes. The polyketide-amino acid backbone of fumosorinone is first assembled by the PKS-NRPS hybrid fumoS. The PKS modules condense one acetyl-CoA starter unit with 7 malonyl-CoA units, programmed C-methylations occurring after the first 3 and the sixth extensions, and cycles of full reduction occurring after the first 2 extensions. Because fumoS lacks a designated enoyl reductase (ER) domain, the required activity is provided the enoyl reductase fumoC. Upon formation of the polyketide backbone on the thiotemplate, the polyketide is transferred to the NRPS module and linked to tyrosine to produce the acyltetramic acid intermediate called prefumosorinone A. The cytochrome P450 monooxygenase fumoA then probably catalyzes an unprecedented oxidative ring expansion of prefumosorinone A to form prefumosorinone B which contains the 2-pyridone core of fumosorinone. The cytochrome P450 monooxygenase fumoB might hydroxylate the nitrogen of prefumosorinone B, but not the acyltetramic acid prefumosorinone A, to form fumosorinone. In Cordyceps fumosorosea (strain ARSEF 2679) (Isaria fumosorosea), this protein is Cytochrome P450 monooxygenase fumoA.